A 211-amino-acid polypeptide reads, in one-letter code: Probable oligoribonuclease (211 aa).

An Exonuclease domain is found at 38–202 (IVWMDLEMTG…DDIRESIKEL (165 aa)). Residue tyrosine 159 is part of the active site.

Belongs to the oligoribonuclease family.

In terms of biological role, 3'-to-5' exoribonuclease specific for small oligoribonucleotides. The chain is Probable oligoribonuclease from Drosophila melanogaster (Fruit fly).